Reading from the N-terminus, the 618-residue chain is Protein polyglycylase TTLL10 (618 aa).

Positions 1–76 (MGSSQEEGLP…GLLLGDGKPS (76 aa)) are disordered. Positions 57-74 (ATGPPAALLEGLLLGDGK) are enriched in low complexity. In terms of domain architecture, TTL spans 82-479 (PGPFFYIGGN…TFQKSLRGQK (398 aa)). ATP-binding positions include Lys240, 246–247 (QG), 289–292 (QRYI), 302–304 (KFD), and 345–346 (TN). Gln246 serves as a coordination point for a protein. Mg(2+) contacts are provided by Asp425, Glu438, and Asn440. The segment at 503 to 618 (LGGSCSLRRR…PATLPAFRDL (116 aa)) is disordered. Positions 539-557 (PVPPPLAPQRPQLPGPSPD) are enriched in pro residues. Over residues 585 to 594 (AKEEREEPEN) the composition is skewed to basic and acidic residues.

The cofactor is Mg(2+).

It is found in the cytoplasm. The protein localises to the cytoskeleton. The protein resides in the cell projection. It localises to the cilium. Its subcellular location is the cilium axoneme. The enzyme catalyses (glycyl)(n)-glycyl-L-glutamyl-[protein] + glycine + ATP = (glycyl)(n+1)-glycyl-L-glutamyl-[protein] + ADP + phosphate + H(+). Polyglycylase which modifies both tubulin and non-tubulin proteins, generating polyglycine side chains of variable lengths on the gamma-carboxyl groups of specific glutamate residues of target proteins. Involved in the elongation step rather than the initiation step of the polyglycylation reaction. Polyglycylates alpha-tubulin and beta-tubulin. Polyglycylates non-tubulin proteins such as nucleosome assembly protein NAP1. This Macaca fascicularis (Crab-eating macaque) protein is Protein polyglycylase TTLL10 (TTLL10).